The following is a 205-amino-acid chain: Putative protein phosphatase inhibitor 2-like protein 1 (205 aa).

Disordered regions lie at residues 1–44 (MAAS…SKKS), 64–92 (GLMK…TETT), 107–148 (AEGL…TLHY), and 171–205 (VEEM…SRSS). Required for binding PPP1CC stretches follow at residues 12 to 17 (KGILKD) and 43 to 55 (KSQK…ILAT). The span at 17–26 (DNTSTTSSMV) shows a compositional bias: polar residues. Basic and acidic residues predominate over residues 30–44 (EHPRGSVHEQLSKKS). Phosphothreonine; by GSK3 is present on T73. Composition is skewed to acidic residues over residues 80–91 (GDDEDACSDTET) and 121–130 (SSGEEDSDLS). S87 carries the post-translational modification Phosphoserine; by CK2. The span at 131–144 (PEEREKKRQFEMRR) shows a compositional bias: basic and acidic residues. Residues 147–150 (HYNE) are required for binding PPP1CC catalytic center, displacing metal ions and inhibition of PPP1CC catalytic activity. Residues 182–205 (SMNTEESNQGSTASDQQQNKSRSS) show a composition bias toward polar residues.

This sequence belongs to the protein phosphatase inhibitor 2 family.

Its function is as follows. Inhibitor of protein-phosphatase 1. This is Putative protein phosphatase inhibitor 2-like protein 1 (PPP1R2P1) from Homo sapiens (Human).